The primary structure comprises 491 residues: Ribosome biogenesis protein YTM1 (491 aa).

A ubiquitin-like (UBL) domain region spans residues 8-103; it reads IKIKFTTNES…EAFLTIEYTR (96 aa). The sufficient for interaction with ERB1 and association with 66S pre-ribosomes stretch occupies residues 113–491; that stretch reads SFQNDDWISS…QINKGSDISK (379 aa). WD repeat units follow at residues 128 to 167, 169 to 207, 241 to 280, 318 to 358, 360 to 399, 409 to 449, and 456 to 491; these read RNLSAVTSSQLTITNPKILSGSYDGIVKTYNMSGKVEKQY, GHSAAVKSVKWISPTRIVSCGNDQQVRLWKTAYEGVVDQ, GHKAPVVDLAVNQQTKRILSAGYDLNVGFWSTNYKDMAKI, GHTE…CVDT, TTGFSLLSILQLPQVNLIATGSSARHINLHDPRVSASNTN, GHTN…SLYT, and STKSKIFGVCWDSEIGLISGGEDKRVQINKGSDISK. A disordered region spans residues 205-228; it reads VDQNEEDEEENEANEGDDGDNDME. The span at 207 to 225 shows a compositional bias: acidic residues; sequence QNEEDEEENEANEGDDGDN.

This sequence belongs to the WD repeat WDR12/YTM1 family. In terms of assembly, component of the NOP7 complex, composed of ERB1, NOP7 and YTM1. The complex is held together by ERB1, which interacts with NOP7 via its N-terminal domain and with YTM1 via a high-affinity interaction between the seven-bladed beta-propeller domains of the 2 proteins. The NOP7 complex associates with the 66S pre-ribosome. Interacts (via UBL domain) with MDN1 (via VWFA/MIDAS domain).

Its subcellular location is the nucleus. It localises to the nucleolus. The protein localises to the nucleoplasm. In terms of biological role, component of the NOP7 complex, which is required for maturation of the 25S and 5.8S ribosomal RNAs and formation of the 60S ribosome. In Lodderomyces elongisporus (strain ATCC 11503 / CBS 2605 / JCM 1781 / NBRC 1676 / NRRL YB-4239) (Yeast), this protein is Ribosome biogenesis protein YTM1.